The sequence spans 156 residues: Aspartate 1-decarboxylase (156 aa).

Ser-29 (schiff-base intermediate with substrate; via pyruvic acid) is an active-site residue. A Pyruvic acid (Ser) modification is found at Ser-29. A substrate-binding site is contributed by Thr-61. Residue Tyr-62 is the Proton donor of the active site. Gly-77–Ala-79 is a binding site for substrate.

Belongs to the PanD family. In terms of assembly, heterooctamer of four alpha and four beta subunits. The cofactor is pyruvate. Is synthesized initially as an inactive proenzyme, which is activated by self-cleavage at a specific serine bond to produce a beta-subunit with a hydroxyl group at its C-terminus and an alpha-subunit with a pyruvoyl group at its N-terminus.

It is found in the cytoplasm. The catalysed reaction is L-aspartate + H(+) = beta-alanine + CO2. Its pathway is cofactor biosynthesis; (R)-pantothenate biosynthesis; beta-alanine from L-aspartate: step 1/1. Its function is as follows. Catalyzes the pyruvoyl-dependent decarboxylation of aspartate to produce beta-alanine. The sequence is that of Aspartate 1-decarboxylase from Rhodopirellula baltica (strain DSM 10527 / NCIMB 13988 / SH1).